The following is a 100-amino-acid chain: Putative antiporter subunit mnhF2 (100 aa).

3 consecutive transmembrane segments (helical) span residues 6-26 (TNFFITSALVLFGIAFIIGLF), 38-58 (VVAFDASSAVIMCIIGIVSVI), and 62-82 (VSFLDSIMLVAIISFVSSVSI).

Belongs to the CPA3 antiporters (TC 2.A.63) subunit F family. As to quaternary structure, may form a heterooligomeric complex that consists of seven subunits: mnhA2, mnhB2, mnhC2, mnhD2, mnhE2, mnhF2 and mnhG2.

It localises to the cell membrane. This is Putative antiporter subunit mnhF2 (mnhF2) from Staphylococcus haemolyticus (strain JCSC1435).